Reading from the N-terminus, the 585-residue chain is MDQLYLEIEISTQKETTIYTGVSSFLALFTYKFLKDPKNVRVNFVSTKIEGGKIALRSSQLKKELTDRHITCRDAASLPAIQDLKLPIYEKDGNTFIAGTCAVCRELIARQPNEELKKLLGFKGSCLLAPSEASIWTKFCEVDLVAVVSKLHSGQVLEFVPQEVVRFEQHMNEPVRMHNIYKQAREQANQTENGGKVKRRERVQIKCTTPKEELLIEHRFAEGISFTIADIILYPLLRIVFQHCGQMLPHFPLTSTWFSEIDSFGDKCARVLRDLYVPQAIKTPPGELGIPDCEATSLYKADPKRYKPRNRIYTSQLELEAALSKLSSLQLQFNSDSEHTYGQQLIDWEQIEPTHAKSSALPKERLERKRQQLENLANAVVSLAQPGDRIVDFCSGTGHLAILLALKLPNCTIIVMENKAFSLLQAQKRSNELGLTNCVFYQCNIDYFVGGFKIGASLHACGTATDIVLQQCRRAKAHFVCCPCCYGSLQPMPHISYPLSKAFQKVLDTKDYLYIAHSADQAHEMGTTNCKPETTLQGLHCMSVVDTDRLLQAEEAGYQVILTRLKPEQCTPKNHLLVGRFVKQN.

In terms of domain architecture, GST C-terminal spans 120 to 275 (LGFKGSCLLA…DKCARVLRDL (156 aa)).

This sequence belongs to the GSTCD family.

In Drosophila melanogaster (Fruit fly), this protein is Glutathione S-transferase C-terminal domain-containing protein homolog.